We begin with the raw amino-acid sequence, 475 residues long: Sulfate adenylyltransferase subunit 1 (475 aa).

Residues 25–239 (KSLLRFLTCG…EVLETVEIQR (215 aa)) form the tr-type G domain. The tract at residues 34–41 (GSVDDGKS) is G1. A GTP-binding site is contributed by 34–41 (GSVDDGKS). The interval 92–96 (GITID) is G2. Positions 113 to 116 (DTPG) are G3. GTP is bound by residues 113-117 (DTPGH) and 168-171 (NKMD). The tract at residues 168-171 (NKMD) is G4. Residues 206-208 (SAL) form a G5 region.

Belongs to the TRAFAC class translation factor GTPase superfamily. Classic translation factor GTPase family. CysN/NodQ subfamily. Heterodimer composed of CysD, the smaller subunit, and CysN.

The catalysed reaction is sulfate + ATP + H(+) = adenosine 5'-phosphosulfate + diphosphate. It functions in the pathway sulfur metabolism; hydrogen sulfide biosynthesis; sulfite from sulfate: step 1/3. With CysD forms the ATP sulfurylase (ATPS) that catalyzes the adenylation of sulfate producing adenosine 5'-phosphosulfate (APS) and diphosphate, the first enzymatic step in sulfur assimilation pathway. APS synthesis involves the formation of a high-energy phosphoric-sulfuric acid anhydride bond driven by GTP hydrolysis by CysN coupled to ATP hydrolysis by CysD. The polypeptide is Sulfate adenylyltransferase subunit 1 (Escherichia fergusonii (strain ATCC 35469 / DSM 13698 / CCUG 18766 / IAM 14443 / JCM 21226 / LMG 7866 / NBRC 102419 / NCTC 12128 / CDC 0568-73)).